Here is a 222-residue protein sequence, read N- to C-terminus: N-acetyltransferase 8F1 (222 aa).

Residues 53-73 (LVLVSGSWILAVICIFFLLLL) traverse the membrane as a helical segment. Residues 69-220 (FLLLLLRLLA…CTIQLKYSFP (152 aa)) enclose the N-acetyltransferase domain.

This sequence belongs to the camello family.

Its subcellular location is the membrane. Its function is as follows. May play a role in regulation of gastrulation. The sequence is that of N-acetyltransferase 8F1 from Mus musculus (Mouse).